The following is a 312-amino-acid chain: Protoheme IX farnesyltransferase (312 aa).

The next 8 membrane-spanning stretches (helical) occupy residues 34-54, 56-76, 119-139, 152-172, 179-199, 225-245, 248-268, and 283-303; these read LVIF…HPVL, ITSL…NMAL, ILVN…YVVI, IVIG…AATG, LLLF…LALF, ILLY…LGYF, VYGV…IEVF, and LFAF…LEAV.

Belongs to the UbiA prenyltransferase family. Protoheme IX farnesyltransferase subfamily.

It is found in the cell inner membrane. It catalyses the reaction heme b + (2E,6E)-farnesyl diphosphate + H2O = Fe(II)-heme o + diphosphate. Its pathway is porphyrin-containing compound metabolism; heme O biosynthesis; heme O from protoheme: step 1/1. In terms of biological role, converts heme B (protoheme IX) to heme O by substitution of the vinyl group on carbon 2 of heme B porphyrin ring with a hydroxyethyl farnesyl side group. The chain is Protoheme IX farnesyltransferase from Bradyrhizobium sp. (strain BTAi1 / ATCC BAA-1182).